Here is a 373-residue protein sequence, read N- to C-terminus: Glutamate 5-kinase (373 aa).

Lys15 is an ATP binding site. Substrate-binding residues include Ser55, Asp142, and Asn154. Residues 174–175 and 216–222 contribute to the ATP site; these read TD and TGGMATK. The 79-residue stretch at 281 to 359 folds into the PUA domain; it reads AGSIVVDAGA…SEIEGILGFR (79 aa).

This sequence belongs to the glutamate 5-kinase family.

The protein resides in the cytoplasm. It catalyses the reaction L-glutamate + ATP = L-glutamyl 5-phosphate + ADP. It functions in the pathway amino-acid biosynthesis; L-proline biosynthesis; L-glutamate 5-semialdehyde from L-glutamate: step 1/2. Catalyzes the transfer of a phosphate group to glutamate to form L-glutamate 5-phosphate. In Citrifermentans bemidjiense (strain ATCC BAA-1014 / DSM 16622 / JCM 12645 / Bem) (Geobacter bemidjiensis), this protein is Glutamate 5-kinase.